Here is a 534-residue protein sequence, read N- to C-terminus: Acetyltransferase MATC1 (534 aa).

Residues His-186 and Asp-459 each act as proton acceptor in the active site.

Belongs to the plant acyltransferase family.

The protein localises to the cell membrane. Its pathway is secondary metabolite biosynthesis. Its function is as follows. Acetyltransferase; part of the gene cluster that mediates the biosynthesis of mannosylerythritol lipids (MELs), surface-active substances that enhance the availability of water-insoluble substrates. Mannosylerythritol lipid production is responsible for hemolytic activity of Ustilago maydis. Depending on the number of acetyl groups, mannosylerythritol lipids can be differentiated into MEL A (fully acetylated), MEL B and MEL C (monoacetylated at R-6 and R-4, respectively), and the fully deacetylated MEL D. The first step in the pathway is the generation of mannosylerythritol by the glycosyltransferase EMT1 which catalyzes the transfer of GDP-mannose to the C-4 atom of meso-erythritol. This reaction has to be stereospecific, since only mannosyl-D-erythritol is generated. The produced disaccharide is subsequently acylated with fatty acids of various lengths derived from the peroxisomal beta-oxidation by the peroxisomal acyltransferases MAC1 and MAC2 at positions C-2 and C-3, repectively. The existence of MEL derivatives which carry an acetyl group at C-2 implies that at least MAC1 also accepts acetyl-CoA as a donor. The final step of MEL biosynthesis is the acetylation of the fully acylated mannosylerythritol lipids catalyzed by the acetyl-CoA-dependent acetyltransferase MAT1. MAT1 displays a relaxed regioselectivity and is able to transfer acetylgroups to both positions C-4 and C-6 of the mannosyl moiety. The protein is Acetyltransferase MATC1 of Mycosarcoma maydis (Corn smut fungus).